The chain runs to 450 residues: tRNA-2-methylthio-N(6)-dimethylallyladenosine synthase (450 aa).

The MTTase N-terminal domain occupies 3–118 (KKVFIKTFGC…LPELLQQRER (116 aa)). 6 residues coordinate [4Fe-4S] cluster: C12, C49, C81, C155, C159, and C162. Residues 141–376 (SVQGASAFVS…VIDTHIRSIS (236 aa)) form the Radical SAM core domain. The TRAM domain maps to 377 to 440 (ASRVGTVQRI…AYTLRGQYCA (64 aa)).

This sequence belongs to the methylthiotransferase family. MiaB subfamily. In terms of assembly, monomer. Requires [4Fe-4S] cluster as cofactor.

It is found in the cytoplasm. It catalyses the reaction N(6)-dimethylallyladenosine(37) in tRNA + (sulfur carrier)-SH + AH2 + 2 S-adenosyl-L-methionine = 2-methylsulfanyl-N(6)-dimethylallyladenosine(37) in tRNA + (sulfur carrier)-H + 5'-deoxyadenosine + L-methionine + A + S-adenosyl-L-homocysteine + 2 H(+). Functionally, catalyzes the methylthiolation of N6-(dimethylallyl)adenosine (i(6)A), leading to the formation of 2-methylthio-N6-(dimethylallyl)adenosine (ms(2)i(6)A) at position 37 in tRNAs that read codons beginning with uridine. In Verminephrobacter eiseniae (strain EF01-2), this protein is tRNA-2-methylthio-N(6)-dimethylallyladenosine synthase.